Here is a 233-residue protein sequence, read N- to C-terminus: 2,3-bisphosphoglycerate-dependent phosphoglycerate mutase (233 aa).

Residues 8–15, 21–22, arginine 60, 116–119, lysine 127, 143–144, and 187–188 each bind substrate; these read RHGQSLWN, TG, ERYY, RR, and GN. Histidine 9 (tele-phosphohistidine intermediate) is an active-site residue. The Proton donor/acceptor role is filled by glutamate 116.

The protein belongs to the phosphoglycerate mutase family. BPG-dependent PGAM subfamily.

The enzyme catalyses (2R)-2-phosphoglycerate = (2R)-3-phosphoglycerate. It participates in carbohydrate degradation; glycolysis; pyruvate from D-glyceraldehyde 3-phosphate: step 3/5. Catalyzes the interconversion of 2-phosphoglycerate and 3-phosphoglycerate. The chain is 2,3-bisphosphoglycerate-dependent phosphoglycerate mutase from Gloeothece citriformis (strain PCC 7424) (Cyanothece sp. (strain PCC 7424)).